We begin with the raw amino-acid sequence, 298 residues long: Cytochrome c oxidase subunit 2 (298 aa).

Residues 1-29 form the signal peptide; sequence MMAIATKRRGVAAVMSLGVATMTAVPALA. Q30 bears the Pyrrolidone carboxylic acid mark. Topologically, residues 30–55 are periplasmic; that stretch reads QDVLGDLPVIGKPVNGGMNFQPASSP. The chain crosses the membrane as a helical span at residues 56-88; it reads LAHDQQWLDHFVLYIITAVTIFVCLLLLICIVR. Residues 89–103 lie on the Cytoplasmic side of the membrane; sequence FNRRANPVPARFTHN. Residues 104–134 form a helical membrane-spanning segment; sequence TPIEVIWTLVPVLILVAIGAFSLPILFRSQE. At 135-280 the chain is on the periplasmic side; that stretch reads MPNDPDLVIK…WLAGAKEEFA (146 aa). Cu cation is bound by residues H210, C245, E247, C249, H253, and M256. Residues 281 to 298 constitute a propeptide, C-terminal propeptide; the sequence is ADASDYLPASPVKLASAE.

This sequence belongs to the cytochrome c oxidase subunit 2 family. Requires binuclear copper center (CuA) as cofactor.

The protein localises to the cell inner membrane. It carries out the reaction 4 Fe(II)-[cytochrome c] + O2 + 8 H(+)(in) = 4 Fe(III)-[cytochrome c] + 2 H2O + 4 H(+)(out). Functionally, subunits I and II form the functional core of the enzyme complex. Electrons originating in cytochrome c are transferred via heme a and Cu(A) to the binuclear center formed by heme a3 and Cu(B). In Paracoccus denitrificans, this protein is Cytochrome c oxidase subunit 2 (ctaC).